The following is a 235-amino-acid chain: MSSPDQDPREAIAQGDDEVIDVRRGMFGAAGTGDTSGYGRLVRTVTLPGSSPRPYGSYFDDVVDTLTESLQSNGIEFHQAIEKVVVYRDELTLHVDRAALPHVAQHLRDDPRLRFEMCLGVSGVHYPHETGRELHAVYPLQSITHNRRVRLEVAVPDGDPHIPSLYRIYPTTDWHERETYDFFGIIFDGHPSLTRIEMPDDWHGHPQRKDYPLGGIPVEYKGAQIPPPDERRAYN.

This sequence belongs to the complex I 30 kDa subunit family. NDH-1 is composed of 14 different subunits. Subunits NuoB, C, D, E, F, and G constitute the peripheral sector of the complex.

Its subcellular location is the cell membrane. The catalysed reaction is a quinone + NADH + 5 H(+)(in) = a quinol + NAD(+) + 4 H(+)(out). Functionally, NDH-1 shuttles electrons from NADH, via FMN and iron-sulfur (Fe-S) centers, to quinones in the respiratory chain. The immediate electron acceptor for the enzyme in this species is believed to be a menaquinone. Couples the redox reaction to proton translocation (for every two electrons transferred, four hydrogen ions are translocated across the cytoplasmic membrane), and thus conserves the redox energy in a proton gradient. In Mycobacterium avium (strain 104), this protein is NADH-quinone oxidoreductase subunit C.